The primary structure comprises 291 residues: Small ribosomal subunit protein uS2 (291 aa).

The protein belongs to the universal ribosomal protein uS2 family.

The sequence is that of Small ribosomal subunit protein uS2 from Orientia tsutsugamushi (strain Boryong) (Rickettsia tsutsugamushi).